Here is a 340-residue protein sequence, read N- to C-terminus: DNA-directed RNA polymerase subunit alpha (340 aa).

The tract at residues 1–233 (MIQDEIKVST…DLFIPLINSE (233 aa)) is alpha N-terminal domain (alpha-NTD). Residues 265-340 (TKDVAFKHIF…IQLPKNKNYL (76 aa)) are alpha C-terminal domain (alpha-CTD).

It belongs to the RNA polymerase alpha chain family. In plastids the minimal PEP RNA polymerase catalytic core is composed of four subunits: alpha, beta, beta', and beta''. When a (nuclear-encoded) sigma factor is associated with the core the holoenzyme is formed, which can initiate transcription.

The protein resides in the plastid. The protein localises to the chloroplast. It carries out the reaction RNA(n) + a ribonucleoside 5'-triphosphate = RNA(n+1) + diphosphate. DNA-dependent RNA polymerase catalyzes the transcription of DNA into RNA using the four ribonucleoside triphosphates as substrates. The chain is DNA-directed RNA polymerase subunit alpha from Marchantia polymorpha (Common liverwort).